We begin with the raw amino-acid sequence, 1202 residues long: DNA-directed RNA polymerase subunit beta (1202 aa).

The segment at 1154 to 1202 is disordered; it reads NMDEDDDEVVNVDALAKYAEEHKADDKKNEEENKSEATSTTTDDKTNQN. The span at 1171-1188 shows a compositional bias: basic and acidic residues; it reads YAEEHKADDKKNEEENKS.

This sequence belongs to the RNA polymerase beta chain family. The RNAP catalytic core consists of 2 alpha, 1 beta, 1 beta' and 1 omega subunit. When a sigma factor is associated with the core the holoenzyme is formed, which can initiate transcription.

The catalysed reaction is RNA(n) + a ribonucleoside 5'-triphosphate = RNA(n+1) + diphosphate. In terms of biological role, DNA-dependent RNA polymerase catalyzes the transcription of DNA into RNA using the four ribonucleoside triphosphates as substrates. This Limosilactobacillus reuteri (strain DSM 20016) (Lactobacillus reuteri) protein is DNA-directed RNA polymerase subunit beta.